The following is a 326-amino-acid chain: tRNA uridine(34) hydroxylase (326 aa).

Residues 123 to 217 (ADPEVFVVDT…YLEEVPQEES (95 aa)) form the Rhodanese domain. Cysteine 177 functions as the Cysteine persulfide intermediate in the catalytic mechanism. The span at 278–288 (QVERFREREKQ) shows a compositional bias: basic and acidic residues. The interval 278–326 (QVERFREREKQVSLANQRGEQHVGGESAKQRAQRREAKLAKKAAQRKQA) is disordered. The span at 317 to 326 (AKKAAQRKQA) shows a compositional bias: basic residues.

This sequence belongs to the TrhO family.

The catalysed reaction is uridine(34) in tRNA + AH2 + O2 = 5-hydroxyuridine(34) in tRNA + A + H2O. In terms of biological role, catalyzes oxygen-dependent 5-hydroxyuridine (ho5U) modification at position 34 in tRNAs. The chain is tRNA uridine(34) hydroxylase from Vibrio parahaemolyticus serotype O3:K6 (strain RIMD 2210633).